A 198-amino-acid polypeptide reads, in one-letter code: tRNA(Phe) 7-((3-amino-3-carboxypropyl)-4-demethylwyosine(37)-N(4))-methyltransferase 1 (198 aa).

It belongs to the TYW3 family.

It carries out the reaction 4-demethyl-7-[(3S)-3-amino-3-carboxypropyl]wyosine(37) in tRNA(Phe) + S-adenosyl-L-methionine = 7-[(3S)-3-amino-3-carboxypropyl]wyosine(37) in tRNA(Phe) + S-adenosyl-L-homocysteine + H(+). S-adenosyl-L-methionine-dependent methyltransferase that acts as a component of the wyosine derivatives biosynthesis pathway. Probably methylates N-4 position of wybutosine-86 to produce wybutosine-72. In Thermococcus kodakarensis (strain ATCC BAA-918 / JCM 12380 / KOD1) (Pyrococcus kodakaraensis (strain KOD1)), this protein is tRNA(Phe) 7-((3-amino-3-carboxypropyl)-4-demethylwyosine(37)-N(4))-methyltransferase 1.